We begin with the raw amino-acid sequence, 561 residues long: 2-succinyl-5-enolpyruvyl-6-hydroxy-3-cyclohexene-1-carboxylate synthase (561 aa).

Belongs to the TPP enzyme family. MenD subfamily. As to quaternary structure, homodimer. It depends on Mg(2+) as a cofactor. Mn(2+) is required as a cofactor. Requires thiamine diphosphate as cofactor.

The enzyme catalyses isochorismate + 2-oxoglutarate + H(+) = 5-enolpyruvoyl-6-hydroxy-2-succinyl-cyclohex-3-ene-1-carboxylate + CO2. Its pathway is quinol/quinone metabolism; 1,4-dihydroxy-2-naphthoate biosynthesis; 1,4-dihydroxy-2-naphthoate from chorismate: step 2/7. It participates in cofactor biosynthesis; phylloquinone biosynthesis. Its function is as follows. Catalyzes the thiamine diphosphate-dependent decarboxylation of 2-oxoglutarate and the subsequent addition of the resulting succinic semialdehyde-thiamine pyrophosphate anion to isochorismate to yield 2-succinyl-5-enolpyruvyl-6-hydroxy-3-cyclohexene-1-carboxylate (SEPHCHC). This is 2-succinyl-5-enolpyruvyl-6-hydroxy-3-cyclohexene-1-carboxylate synthase from Synechococcus sp. (strain CC9605).